Consider the following 495-residue polypeptide: Aspartyl/glutamyl-tRNA(Asn/Gln) amidotransferase subunit B (495 aa).

This sequence belongs to the GatB/GatE family. GatB subfamily. Heterotrimer of A, B and C subunits.

It catalyses the reaction L-glutamyl-tRNA(Gln) + L-glutamine + ATP + H2O = L-glutaminyl-tRNA(Gln) + L-glutamate + ADP + phosphate + H(+). The enzyme catalyses L-aspartyl-tRNA(Asn) + L-glutamine + ATP + H2O = L-asparaginyl-tRNA(Asn) + L-glutamate + ADP + phosphate + 2 H(+). Its function is as follows. Allows the formation of correctly charged Asn-tRNA(Asn) or Gln-tRNA(Gln) through the transamidation of misacylated Asp-tRNA(Asn) or Glu-tRNA(Gln) in organisms which lack either or both of asparaginyl-tRNA or glutaminyl-tRNA synthetases. The reaction takes place in the presence of glutamine and ATP through an activated phospho-Asp-tRNA(Asn) or phospho-Glu-tRNA(Gln). The protein is Aspartyl/glutamyl-tRNA(Asn/Gln) amidotransferase subunit B of Methanosarcina mazei (strain ATCC BAA-159 / DSM 3647 / Goe1 / Go1 / JCM 11833 / OCM 88) (Methanosarcina frisia).